We begin with the raw amino-acid sequence, 211 residues long: MVVEKQTKYEEFRLKRVEENKKRMEALNLPKLSQILNSTSVKISPMKKRSIPRTPEKKMVDVKRVHIQRRGVGKKRDLLNRVYVSEEIRDEAISRANKFQDELGSGYPSFVKSMLQSHVSGGFWLGLPVQFCKSHLGLHDGVITLIDEEGEEYETIYLARKNGLSGGWMGFAVAHNLAYGDTLVFELVRRTAFKVYITRVGSCGESSKDMS.

The TF-B3 DNA-binding region spans Phe110 to Gly201.

The protein localises to the nucleus. The sequence is that of B3 domain-containing protein At5g42700 from Arabidopsis thaliana (Mouse-ear cress).